The chain runs to 382 residues: uncharacterized protein (382 aa).

A run of 12 helical transmembrane segments spans residues 14–34 (GLLL…LWLA), 45–65 (VVSS…GYVI), 79–99 (FIFA…SWLA), 102–122 (FVAG…LMCS), 131–151 (LLAA…LLVS), 157–177 (LMSV…PLLF), 204–224 (LGVN…GLMP), 235–255 (ASIG…QWPI), 270–290 (VQVF…AMAP), 291–311 (ALFI…AWAC), 325–345 (ALLL…AMLM), and 348–368 (FSDN…LLML).

Belongs to the major facilitator superfamily. YcaD (TC 2.A.1.26) family.

It is found in the cell inner membrane. This is an uncharacterized protein from Escherichia coli O45:K1 (strain S88 / ExPEC).